Consider the following 269-residue polypeptide: 5'-nucleotidase SurE (269 aa).

A divalent metal cation contacts are provided by Asp11, Asp12, Ser43, and Asn101.

It belongs to the SurE nucleotidase family. Requires a divalent metal cation as cofactor.

Its subcellular location is the cytoplasm. The catalysed reaction is a ribonucleoside 5'-phosphate + H2O = a ribonucleoside + phosphate. In terms of biological role, nucleotidase that shows phosphatase activity on nucleoside 5'-monophosphates. This chain is 5'-nucleotidase SurE, found in Prochlorococcus marinus (strain MIT 9211).